Consider the following 259-residue polypeptide: MNLVDLWLTRSLSMCLLLQSFVLMILCFHSASMCPKGCLCSSSGGLNVTCSNANLKEIPRDLPPETVLLYLDSNQITSIPNEIFKDLHQLRVLNLSKNGIEFIDEHAFKGVAETLQTLDLSDNRIQSVHKNAFNNLKARARIANNPWHCDCTLQQVLRSMASNHETAHNVICKTSVLDEHAGRPFLNAANDADLCNLPKKTTDYAMLVTMFGWFTMVISYVVYYVRQNQEDARRHLEYLKSLPSRQKKADEPDDISTVV.

An N-terminal signal peptide occupies residues 1 to 33; it reads MNLVDLWLTRSLSMCLLLQSFVLMILCFHSASM. The LRRNT domain occupies 34 to 64; it reads CPKGCLCSSSGGLNVTCSNANLKEIPRDLPP. An N-linked (GlcNAc...) asparagine glycan is attached at Asn47. LRR repeat units follow at residues 65–86, 89–110, and 114–135; these read ETVL…IFKD, QLRV…AFKG, and TLQT…AFNN. Asn94 is a glycosylation site (N-linked (GlcNAc...) asparagine). In terms of domain architecture, LRRCT spans 145 to 197; the sequence is NPWHCDCTLQQVLRSMASNHETAHNVICKTSVLDEHAGRPFLNAANDADLCNL. A helical membrane pass occupies residues 205-225; the sequence is AMLVTMFGWFTMVISYVVYYV.

This sequence belongs to the LRRC3 family.

The protein localises to the membrane. In Homo sapiens (Human), this protein is Leucine-rich repeat-containing protein 3B (LRRC3B).